The chain runs to 280 residues: Phosphatidylglycerol--prolipoprotein diacylglyceryl transferase (280 aa).

Transmembrane regions (helical) follow at residues 30 to 50 (WYGLAYVAGILLGWLYARRII), 71 to 91 (FLLWAAGGIVLGGRIGYILFY), 106 to 126 (IWNGGMSFHGGLLGTTLAIII), and 132 to 152 (AIPLWSLFDVVAAVVPIGLFF). Arginine 154 is an a 1,2-diacyl-sn-glycero-3-phospho-(1'-sn-glycerol) binding site. The next 3 helical transmembrane spans lie at 188–208 (QLYEAALEGIVLLVVLAWFVY), 217–237 (GLVTGIFVCGYAASRIFVEFF), and 251–271 (WLTMGMVLSLPMALVGIWAIA).

It belongs to the Lgt family.

The protein resides in the cell inner membrane. It carries out the reaction L-cysteinyl-[prolipoprotein] + a 1,2-diacyl-sn-glycero-3-phospho-(1'-sn-glycerol) = an S-1,2-diacyl-sn-glyceryl-L-cysteinyl-[prolipoprotein] + sn-glycerol 1-phosphate + H(+). It functions in the pathway protein modification; lipoprotein biosynthesis (diacylglyceryl transfer). In terms of biological role, catalyzes the transfer of the diacylglyceryl group from phosphatidylglycerol to the sulfhydryl group of the N-terminal cysteine of a prolipoprotein, the first step in the formation of mature lipoproteins. This Rhizobium meliloti (strain 1021) (Ensifer meliloti) protein is Phosphatidylglycerol--prolipoprotein diacylglyceryl transferase.